Here is a 345-residue protein sequence, read N- to C-terminus: MEKYSIRSNIVHKLDDNQPLLSERVTARLEAVNRNRVVKIVPQHRYNVRLTPSMLNRDGYINASLMEFSDVGQKYILTGIPSEDKVFAFWQMVLEQRSPTIIQFADNVEEKLEHYDKYFPDKGDVWSYGHLQVERKSYAIHQGNFHTRNFILRKGNETHRVLHFTVFGWTETTTPIMQDFLALRKVMKDTGALNMINPASALFRSTMRRYIHTPPSFAPIIQSARGSSRAGAFVVIDLLIRMIDGKKTNLYSVEDLIVKCKHMRIHCVPVALHHSFIYEAVLDYLLRRNPRFQDFKEPLIAYSESCFVKWSSMDKEIEKFINTKTWFLNESSRNKFLRSVMPPVV.

A Tyrosine-protein phosphatase domain is found at 33-284 (NRNRVVKIVP…SFIYEAVLDY (252 aa)).

It belongs to the protein-tyrosine phosphatase family. In terms of tissue distribution, expressed in the 2 embryonic head hypodermal cells XXXL/R.

It is found in the cytoplasm. The protein resides in the cell membrane. Functionally, together with eak-4 and phosphatase eak-6, negatively regulates dauer larva formation downstream of insulin-like receptor daf-2 and in parallel of age-1, pdk-1 and akt-1. The chain is Protein sdf-9 from Caenorhabditis elegans.